A 197-amino-acid chain; its full sequence is MSKRIRFDGAQAGWRATPRPGCTLDQRDWLTRGGSLTAHLARLGSVSVRVTREAVDCPWFDEPDALDSAPRAPMWVREVILSVDGTPYVAAHSIAPLAASKGGWQAMRRLRTRPLAELLYSDPQVERSALVSRRVIAGHPLYALASHALQGARAPHAFVARRSVFQRHGTPLMVTECMLPALWRHLDAHGDGPRGAA.

Substrate contacts are provided by Arg77, Leu115, and Glu176.

The protein belongs to the UbiC family.

Its subcellular location is the cytoplasm. It carries out the reaction chorismate = 4-hydroxybenzoate + pyruvate. It participates in cofactor biosynthesis; ubiquinone biosynthesis. Removes the pyruvyl group from chorismate, with concomitant aromatization of the ring, to provide 4-hydroxybenzoate (4HB) for the ubiquinone pathway. The protein is Probable chorismate pyruvate-lyase of Burkholderia ambifaria (strain ATCC BAA-244 / DSM 16087 / CCUG 44356 / LMG 19182 / AMMD) (Burkholderia cepacia (strain AMMD)).